Here is a 525-residue protein sequence, read N- to C-terminus: Serine/threonine protein phosphatase 2A 55 kDa regulatory subunit B beta isoform (525 aa).

The segment at 1–31 (MDPFSKSPDDDDLRPEAEAARRPQPQPQPRE) is disordered. WD repeat units lie at residues 48–87 (QEVDIISAIEFDKSGDHLATGDRGGRVVLFERTDSRDSAS) and 124–165 (EIEE…VKRI). Residues 169–191 (NLNTSQSSGNGTTSSSSSSSSRA) are disordered. Over residues 171-189 (NTSQSSGNGTTSSSSSSSS) the composition is skewed to low complexity. WD repeat units lie at residues 244-282 (AHDYHINSISNNSDGETYISADDLRINLWNLEISNQSFN), 293-333 (DLTE…LCDN), 352-390 (EIIASVSDIKFARDGRHILSRDYMTLKLWDINMDSGPVA), and 495-525 (DLSTKLLHLAWHPTENSIACAAANSLYMYYA).

This sequence belongs to the phosphatase 2A regulatory subunit B family. PP2A consists of a common heteromeric enzyme, composed of a catalytic subunit (subunits C), a constant regulatory subunit (subunit A), and a variety of regulatory subunits such as subunits B (the R2/B/PR55/B55, R3/B''/PR72/PR130/PR59 and R5/B'/B56 families).

The B regulatory subunit may modulate substrate selectivity and catalytic activity, and may also direct the localization of the catalytic enzyme to a particular subcellular compartment. In Oryza sativa subsp. indica (Rice), this protein is Serine/threonine protein phosphatase 2A 55 kDa regulatory subunit B beta isoform.